The chain runs to 464 residues: UDP-N-acetylmuramoylalanine--D-glutamate ligase (464 aa).

127-133 (GSNGKST) lines the ATP pocket.

It belongs to the MurCDEF family.

It localises to the cytoplasm. The catalysed reaction is UDP-N-acetyl-alpha-D-muramoyl-L-alanine + D-glutamate + ATP = UDP-N-acetyl-alpha-D-muramoyl-L-alanyl-D-glutamate + ADP + phosphate + H(+). The protein operates within cell wall biogenesis; peptidoglycan biosynthesis. Functionally, cell wall formation. Catalyzes the addition of glutamate to the nucleotide precursor UDP-N-acetylmuramoyl-L-alanine (UMA). The polypeptide is UDP-N-acetylmuramoylalanine--D-glutamate ligase (Roseobacter denitrificans (strain ATCC 33942 / OCh 114) (Erythrobacter sp. (strain OCh 114))).